Reading from the N-terminus, the 357-residue chain is tRNA N6-adenosine threonylcarbamoyltransferase (357 aa).

Fe cation contacts are provided by His116 and His120. Residues 139–143 (LVSGG), Asp172, Gly185, and Asn284 contribute to the substrate site. Asp312 is a Fe cation binding site.

This sequence belongs to the KAE1 / TsaD family. Fe(2+) serves as cofactor.

The protein localises to the cytoplasm. It catalyses the reaction L-threonylcarbamoyladenylate + adenosine(37) in tRNA = N(6)-L-threonylcarbamoyladenosine(37) in tRNA + AMP + H(+). Required for the formation of a threonylcarbamoyl group on adenosine at position 37 (t(6)A37) in tRNAs that read codons beginning with adenine. Is involved in the transfer of the threonylcarbamoyl moiety of threonylcarbamoyl-AMP (TC-AMP) to the N6 group of A37, together with TsaE and TsaB. TsaD likely plays a direct catalytic role in this reaction. This Synechococcus sp. (strain CC9605) protein is tRNA N6-adenosine threonylcarbamoyltransferase.